The chain runs to 465 residues: Gamma-aminobutyric acid receptor subunit gamma-1 (465 aa).

Residues 1–20 form the signal peptide; sequence MGSGKAFLFSPSLLWSQTRG. At 21-273 the chain is on the extracellular side; that stretch reads VRLIFLLLTL…FDLSRRMGYF (253 aa). Residues Asn-50 and Asn-127 are each glycosylated (N-linked (GlcNAc...) asparagine). The cysteines at positions 188 and 202 are disulfide-linked. N-linked (GlcNAc...) asparagine glycosylation is present at Asn-245. The chain crosses the membrane as a helical span at residues 274–294; it reads TIQTYIPCILTVVLSWVSFWI. Over 295 to 300 the chain is Cytoplasmic; the sequence is NKDAVP. Residues 301 to 320 form a helical membrane-spanning segment; the sequence is ARTSLGITTVLTMTTLSTIA. The Extracellular portion of the chain corresponds to 321–328; sequence RKSLPKVS. A helical membrane pass occupies residues 329–349; the sequence is YVTAMDLFVSVCFIFVFAALM. Topologically, residues 350–444 are cytoplasmic; the sequence is EYGTLHYFTS…RIAKIDSYSR (95 aa). The chain crosses the membrane as a helical span at residues 445-465; the sequence is IFFPTAFALFNLVYWVGYLYL.

The protein belongs to the ligand-gated ion channel (TC 1.A.9) family. Gamma-aminobutyric acid receptor (TC 1.A.9.5) subfamily. GABRG1 sub-subfamily. In terms of assembly, heteropentamer, formed by a combination of alpha (GABRA1-6), beta (GABRB1-3), gamma (GABRG1-3), delta (GABRD), epsilon (GABRE), rho (GABRR1-3), pi (GABRP) and theta (GABRQ) chains, each subunit exhibiting distinct physiological and pharmacological properties. In terms of processing, may be palmitoylated. In terms of tissue distribution, expressed in brain.

The protein resides in the postsynaptic cell membrane. Its subcellular location is the cell membrane. It carries out the reaction chloride(in) = chloride(out). Its function is as follows. Gamma subunit of the heteropentameric ligand-gated chloride channel gated by gamma-aminobutyric acid (GABA), a major inhibitory neurotransmitter in the brain. GABA-gated chloride channels, also named GABA(A) receptors (GABAAR), consist of five subunits arranged around a central pore and contain GABA active binding site(s) located at the alpha and beta subunit interface(s). When activated by GABA, GABAARs selectively allow the flow of chloride anions across the cell membrane down their electrochemical gradient. Chloride influx into the postsynaptic neuron following GABAAR opening decreases the neuron ability to generate a new action potential, thereby reducing nerve transmission. The polypeptide is Gamma-aminobutyric acid receptor subunit gamma-1 (Mus musculus (Mouse)).